We begin with the raw amino-acid sequence, 301 residues long: 4-hydroxy-tetrahydrodipicolinate synthase (301 aa).

Thr-46 serves as a coordination point for pyruvate. The active-site Proton donor/acceptor is Tyr-135. Lys-163 serves as the catalytic Schiff-base intermediate with substrate. Residue Ile-205 coordinates pyruvate.

Belongs to the DapA family. In terms of assembly, homotetramer; dimer of dimers.

Its subcellular location is the cytoplasm. It catalyses the reaction L-aspartate 4-semialdehyde + pyruvate = (2S,4S)-4-hydroxy-2,3,4,5-tetrahydrodipicolinate + H2O + H(+). Its pathway is amino-acid biosynthesis; L-lysine biosynthesis via DAP pathway; (S)-tetrahydrodipicolinate from L-aspartate: step 3/4. Its function is as follows. Catalyzes the condensation of (S)-aspartate-beta-semialdehyde [(S)-ASA] and pyruvate to 4-hydroxy-tetrahydrodipicolinate (HTPA). The sequence is that of 4-hydroxy-tetrahydrodipicolinate synthase from Lacticaseibacillus casei (strain BL23) (Lactobacillus casei).